The following is a 93-amino-acid chain: Large ribosomal subunit protein eL42 (93 aa).

Cysteine 11, cysteine 14, cysteine 72, and cysteine 75 together coordinate Zn(2+). Residues 11–75 (CPHCHSHFEH…TDLKYRCSEC (65 aa)) form a C4-type zinc finger.

Belongs to the eukaryotic ribosomal protein eL42 family. Part of the 50S ribosomal subunit. Zn(2+) serves as cofactor.

In terms of biological role, binds to the 23S rRNA. This chain is Large ribosomal subunit protein eL42 (rpl44e), found in Natronomonas pharaonis (strain ATCC 35678 / DSM 2160 / CIP 103997 / JCM 8858 / NBRC 14720 / NCIMB 2260 / Gabara) (Halobacterium pharaonis).